Consider the following 126-residue polypeptide: Phosphoribosyl-AMP cyclohydrolase (126 aa).

D77 lines the Mg(2+) pocket. C78 contributes to the Zn(2+) binding site. Positions 79 and 81 each coordinate Mg(2+). C95 and C102 together coordinate Zn(2+).

Belongs to the PRA-CH family. As to quaternary structure, homodimer. It depends on Mg(2+) as a cofactor. Zn(2+) serves as cofactor.

The protein localises to the cytoplasm. It catalyses the reaction 1-(5-phospho-beta-D-ribosyl)-5'-AMP + H2O = 1-(5-phospho-beta-D-ribosyl)-5-[(5-phospho-beta-D-ribosylamino)methylideneamino]imidazole-4-carboxamide. Its pathway is amino-acid biosynthesis; L-histidine biosynthesis; L-histidine from 5-phospho-alpha-D-ribose 1-diphosphate: step 3/9. In terms of biological role, catalyzes the hydrolysis of the adenine ring of phosphoribosyl-AMP. The polypeptide is Phosphoribosyl-AMP cyclohydrolase (Cellvibrio japonicus (strain Ueda107) (Pseudomonas fluorescens subsp. cellulosa)).